The chain runs to 205 residues: Holliday junction branch migration complex subunit RuvA (205 aa).

The domain I stretch occupies residues 1–65 (MIAKLKGILD…EDRIHLFGFL (65 aa)). The interval 66–144 (DNTEKVAFNM…NINTIANNTS (79 aa)) is domain II. The tract at residues 145–153 (LAILSTDSN) is flexible linker. The tract at residues 154–205 (THDNILSDAITALIALGISRAEATQILSDIYALFPSISVNELVRTALQRRAK) is domain III.

This sequence belongs to the RuvA family. Homotetramer. Forms an RuvA(8)-RuvB(12)-Holliday junction (HJ) complex. HJ DNA is sandwiched between 2 RuvA tetramers; dsDNA enters through RuvA and exits via RuvB. An RuvB hexamer assembles on each DNA strand where it exits the tetramer. Each RuvB hexamer is contacted by two RuvA subunits (via domain III) on 2 adjacent RuvB subunits; this complex drives branch migration. In the full resolvosome a probable DNA-RuvA(4)-RuvB(12)-RuvC(2) complex forms which resolves the HJ.

The protein resides in the cytoplasm. The RuvA-RuvB-RuvC complex processes Holliday junction (HJ) DNA during genetic recombination and DNA repair, while the RuvA-RuvB complex plays an important role in the rescue of blocked DNA replication forks via replication fork reversal (RFR). RuvA specifically binds to HJ cruciform DNA, conferring on it an open structure. The RuvB hexamer acts as an ATP-dependent pump, pulling dsDNA into and through the RuvAB complex. HJ branch migration allows RuvC to scan DNA until it finds its consensus sequence, where it cleaves and resolves the cruciform DNA. This Orientia tsutsugamushi (strain Boryong) (Rickettsia tsutsugamushi) protein is Holliday junction branch migration complex subunit RuvA.